The primary structure comprises 369 residues: Phospho-N-acetylmuramoyl-pentapeptide-transferase (369 aa).

10 consecutive transmembrane segments (helical) span residues 13 to 33 (ISGI…ALTL), 49 to 69 (LPLL…VPLL), 95 to 115 (MGGI…SNFA), 119 to 139 (LAVS…DWQI), 154 to 174 (LALQ…NQPA), 183 to 203 (WVSF…FVLV), 215 to 235 (IDGL…AIVA), 237 to 257 (TSPA…GFLA), 281 to 301 (AVAL…IFFV), and 346 to 366 (VVSS…AIAS).

The protein belongs to the glycosyltransferase 4 family. MraY subfamily. It depends on Mg(2+) as a cofactor.

It is found in the cell inner membrane. The enzyme catalyses UDP-N-acetyl-alpha-D-muramoyl-L-alanyl-gamma-D-glutamyl-meso-2,6-diaminopimeloyl-D-alanyl-D-alanine + di-trans,octa-cis-undecaprenyl phosphate = di-trans,octa-cis-undecaprenyl diphospho-N-acetyl-alpha-D-muramoyl-L-alanyl-D-glutamyl-meso-2,6-diaminopimeloyl-D-alanyl-D-alanine + UMP. Its pathway is cell wall biogenesis; peptidoglycan biosynthesis. Functionally, catalyzes the initial step of the lipid cycle reactions in the biosynthesis of the cell wall peptidoglycan: transfers peptidoglycan precursor phospho-MurNAc-pentapeptide from UDP-MurNAc-pentapeptide onto the lipid carrier undecaprenyl phosphate, yielding undecaprenyl-pyrophosphoryl-MurNAc-pentapeptide, known as lipid I. This chain is Phospho-N-acetylmuramoyl-pentapeptide-transferase, found in Nostoc sp. (strain PCC 7120 / SAG 25.82 / UTEX 2576).